A 77-amino-acid chain; its full sequence is Conotoxin PnMEKL-04 (77 aa).

An N-terminal signal peptide occupies residues 1–19 (MEKLTILLLVAAVLMSTQA). Residues 20–45 (LPQGGGENRLKENIKFLLKRKTAADR) constitute a propeptide that is removed on maturation. Cystine bridges form between cysteine 51–cysteine 65, cysteine 58–cysteine 69, and cysteine 64–cysteine 73.

The protein belongs to the conotoxin O2 superfamily. In terms of tissue distribution, expressed by the venom duct.

Its subcellular location is the secreted. The sequence is that of Conotoxin PnMEKL-04 from Conus pennaceus (Feathered cone).